The following is a 321-amino-acid chain: Beta-porphyranase B (321 aa).

The signal sequence occupies residues 1 to 20 (MRKTVLYLSAASLFLSSYTL). A GH16 domain is found at 31–319 (EHIKNLPEAP…WVRAYKLVPI (289 aa)). Positions 72, 76, 173, 178, and 284 each coordinate substrate. E173 acts as the Nucleophile in catalysis. E178 serves as the catalytic Proton donor.

Belongs to the glycosyl hydrolase 16 family.

It carries out the reaction Hydrolysis of beta-D-galactopyranose-(1-&gt;4)-alpha-L-galactopyranose-6-sulfate linkages in porphyran.. Its function is as follows. Cleaves the sulfated polysaccharide porphyran at the (1-&gt;4) linkages between beta-D-galactopyranose and alpha-L-galactopyranose-6-sulfate, forming mostly the disaccharide alpha-L-galactopyranose-6-sulfate-(1-&gt;3)-beta-D-galactose. Some longer oligosaccharides of even number of residues are also observed. Inactive on the non-sulfated agarose portion of the porphyran backbone. In Phocaeicola plebeius (strain DSM 17135 / JCM 12973 / CCUG 54634 / M2) (Bacteroides plebeius), this protein is Beta-porphyranase B.